A 203-amino-acid polypeptide reads, in one-letter code: Superoxide dismutase [Mn] (203 aa).

Residues H27, H81, D164, and H168 each contribute to the Mn(2+) site.

It belongs to the iron/manganese superoxide dismutase family. Mn(2+) serves as cofactor.

The catalysed reaction is 2 superoxide + 2 H(+) = H2O2 + O2. Functionally, destroys superoxide anion radicals which are normally produced within the cells and which are toxic to biological systems. This Xanthomonas campestris pv. campestris (strain 8004) protein is Superoxide dismutase [Mn] (sodA).